The sequence spans 304 residues: Galactofuranosyltransferase GlfT1 (304 aa).

The protein belongs to the glycosyltransferase 2 family. As to quaternary structure, is probably part of an AG biosynthetic complex.

The protein localises to the cell membrane. The protein resides in the secreted. It is found in the cell wall. The catalysed reaction is alpha-L-rhamnosyl-(1-&gt;3)-N-acetyl-alpha-D-glucosaminyl-diphospho-trans,octa-cis-decaprenol + 2 UDP-alpha-D-galactofuranose = beta-D-galactofuranosyl-(1-&gt;5)-beta-D-galactofuranosyl-(1-&gt;4)-alpha-L-rhamnosyl-(1-&gt;3)-N-acetyl-alpha-D-glucosaminyl-diphospho-trans,octa-cis-decaprenol + 2 UDP + 2 H(+). It participates in cell wall biogenesis; cell wall polysaccharide biosynthesis. Involved in the biosynthesis of the arabinogalactan (AG) region of the mycolylarabinogalactan-peptidoglycan (mAGP) complex, an essential component of the mycobacterial cell wall. Catalyzes the transfer of the first two galactofuranosyl (Galf) units from UDP-galactofuranose (UDP-Galf) onto the rhamnosyl-GlcNAc-diphospho-decaprenol (Rha-GlcNAc-PP-C50) acceptor, yielding galactofuranosyl-galactofuranosyl-rhamnosyl-GlcNAc-diphospho-decaprenol (Galf-Galf-Rha-GlcNAc-PP-C50). Thus, GlfT1 is the initiator of galactan synthesis, while GlfT2 continues with the subsequent polymerization events. The polypeptide is Galactofuranosyltransferase GlfT1 (Mycobacterium tuberculosis (strain CDC 1551 / Oshkosh)).